The following is a 1056-amino-acid chain: MMGDYRLPDHPQPMEILNLYLGDSLEPHPGECPRETCSHEDPPEPFEEQTWATDPPEPTRQNVPPWGSGVELTHLGSWVHQDGLEPCQEQTRATDPPESTRQDAPPWGSGVELTHLGSPSAQREHRQNTASPGSPVNSHLPGSPKQNRSTSTQVVFWAGILQAQMCVLDLEEELEKTEGLKAGLKCCLPTPPVDLPGDTGLHSSPPENEDSGEDSSEPEGEGQAWLREGTPDSSPQWGAEEESMFFSNPLFLASPCSENSASGECFSWGASDSHAGVRTGPESPATLEPPLPEDTVLWELESEPDLGDGAAISGHCTPPFPVPIYKPHSICWASVAAAEGAPAAPPGHGESEGDRLGPAPSAAPCVDEALTWESGCVGSDLGPAAHPVQPWASLSPEGWQRGGPFWPQVTLNSQDRDEREGGHPQESLPCTLAPCPWRSPASSPEPSSPESESRGPGPRPSPASSQEGSPQLQHHSSGILPKWTLDASQSSLLETDGEQPSSLKKKEAGEAPKPGEEVKSEGTARPAETGDVQPDIHLTSAEHENLRTPMNSSWLPGSPMPQAQSPEEGQRPPAGDKLANGVRNNKVAWNLASRLYRLEGFRKSEVAAYLQKNNDFSRAVAEEYLSFFQFGGQSLDRALRSFLQALVLSGETQERERILYQFSRRFHHCNPGIFPSVDSVHTLTCAIMLLNTDLHGQNIGKSMSCQEFITNLNGLRDGGNFPKELLKALYWSIRSEKLEWAVDEEDTARPEKAQPSLPAGKMSKPFLQLAQDPTVPTYKQGILARKMHQDADGKKTPWGKRGWKMFHTLLRGMVLYFLKQGEDHCLEGESLVGQMVDEPVGVHHSLATPATHYTKKPHVFQLRTADWRLYLFQAPTAKEMSSWIARINLAAATHSAPPFPAAVGSQRRFVRPILPVGPAQSSLEEQHRSHENCLDAAADDLLDLQRNLPERRGRGRELEEHRLRKEYLEYEKTRYETYVQLLVARLHCPSDALDLWEEQLGREAGGTREPKLSLKKSHSSPSLHQDEAPTTAKVKRNISERRTYRKIIPKRNRNQL.

The span at L25–P42 shows a compositional bias: basic and acidic residues. Disordered stretches follow at residues L25 to E71, C87 to S149, L195 to A239, G340 to A362, V388 to Q533, and L546 to G581. Composition is skewed to polar residues over residues Q88 to S99 and N128 to N137. Phosphoserine occurs at positions 131, 134, and 143. Residues E207–G220 show a composition bias toward acidic residues. Position 413 is a phosphoserine (S413). Residues Q414 to H423 are compositionally biased toward basic and acidic residues. Over residues R438–P456 the composition is skewed to low complexity. S448, S469, and S491 each carry phosphoserine. Composition is skewed to polar residues over residues Q466–S476 and D486–S502. Positions K504–G522 are enriched in basic and acidic residues. The SEC7 domain maps to E544–E736. The span at T548–E567 shows a compositional bias: polar residues. The PH domain occupies P776 to A892. The stretch at S921–E976 forms a coiled coil. The tract at residues A1004–L1056 is disordered. 2 positions are modified to phosphoserine: S1019 and S1022. Over residues T1043–L1056 the composition is skewed to basic residues.

In terms of tissue distribution, widely expressed. Highest levels of expression are found in placenta, pancreas, spleen, thymus and peripheral blood.

Its subcellular location is the cell membrane. The protein localises to the cell projection. The protein resides in the ruffle membrane. Guanine nucleotide exchange factor for ARF6 and ARL14/ARF7. Through ARL14 activation, controls the movement of MHC class II-containing vesicles along the actin cytoskeleton in dendritic cells. Involved in membrane recycling. Interacts with several phosphatidylinositol phosphate species, including phosphatidylinositol 3,4-bisphosphate, phosphatidylinositol 3,5-bisphosphate and phosphatidylinositol 4,5-bisphosphate. In Homo sapiens (Human), this protein is PH and SEC7 domain-containing protein 4 (PSD4).